The following is a 313-amino-acid chain: Serine/threonine-protein phosphatase PP2A-4 catalytic subunit (313 aa).

The Mn(2+) site is built by D61, H63, D89, and N121. The active-site Proton donor is the H122. Mn(2+) contacts are provided by H171 and H245. L313 is subject to Leucine methyl ester.

It belongs to the PPP phosphatase family. PP-2A subfamily. In terms of assembly, PP2A consists of a common heterodimeric core enzyme, composed of a 36 kDa catalytic subunit (subunit C) and a 65 kDa constant regulatory subunit (subunit A), that associates with a variety of regulatory subunits such as subunits B (the R2/B/PR55/B55, R3/B''/PR72/PR130/PR59 and R5/B'/B56 families). Interacts with SIC/RON3. Requires Mn(2+) as cofactor. Post-translationally, reversibly methyl esterified on Leu-313 by leucine carboxyl methyltransferase 1 (LCMT1) and pectin methylesterase 1 (PME1). Carboxyl methylation influences the affinity of the catalytic subunit for the different regulatory subunits, thereby modulating the PP2A holoenzyme's substrate specificity, enzyme activity and cellular localization. Phosphorylation of either threonine (by autophosphorylation-activated protein kinase) or tyrosine results in inactivation of the phosphatase. Auto-dephosphorylation has been suggested as a mechanism for reactivation.

It is found in the cytoplasm. The catalysed reaction is O-phospho-L-seryl-[protein] + H2O = L-seryl-[protein] + phosphate. The enzyme catalyses O-phospho-L-threonyl-[protein] + H2O = L-threonyl-[protein] + phosphate. Its function is as follows. Functions redundantly with PP2A3, and is involved in establishing auxin gradients, apical-basal axis of polarity and root and shoot apical meristem during embryogenesis. May dephosphorylate PIN1 and regulate its subcellular distribution for polar auxin transport. The holoenzyme composed of PP2AA1, PP2A4 and B'ZETA or B'ETA acts as a negative regulator of plant innate immunity by controlling BAK1 phosphorylation state and activation in surface-localized immune receptor complexes. The protein is Serine/threonine-protein phosphatase PP2A-4 catalytic subunit of Arabidopsis thaliana (Mouse-ear cress).